Reading from the N-terminus, the 770-residue chain is Molybdenum cofactor sulfurase (770 aa).

An N6-(pyridoxal phosphate)lysine modification is found at Lys-231. The active site involves Cys-395. The 170-residue stretch at 601-770 folds into the MOSC domain; the sequence is DWVSRALGVS…TVSGVIEESE (170 aa).

This sequence belongs to the class-V pyridoxal-phosphate-dependent aminotransferase family. MOCOS subfamily. Requires pyridoxal 5'-phosphate as cofactor.

The enzyme catalyses Mo-molybdopterin + L-cysteine + AH2 = thio-Mo-molybdopterin + L-alanine + A + H2O. Functionally, sulfurates the molybdenum cofactor. Sulfation of molybdenum is essential for xanthine dehydrogenase (XDH) and aldehyde oxidase (ADO) enzymes in which molybdenum cofactor is liganded by 1 oxygen and 1 sulfur atom in active form. The polypeptide is Molybdenum cofactor sulfurase (Anopheles gambiae (African malaria mosquito)).